Consider the following 947-residue polypeptide: Protein RRC1-like (947 aa).

The segment covering 1 to 11 (MVKDEFFLDHP) has biased composition (basic and acidic residues). Disordered stretches follow at residues 1 to 35 (MVKD…RMKQ) and 63 to 167 (PNDN…DELP). The segment covering 12 to 34 (GRKHRSRNTEKKKKPRRRERRMK) has biased composition (basic residues). 2 stretches are compositionally biased toward basic and acidic residues: residues 66-84 (NKLK…DSIS) and 104-155 (KGPE…DHNS). In terms of domain architecture, RRM spans 187-268 (TNLYVVNLSS…YELKIGWGKV (82 aa)). Residues 336 to 379 (IIDTMALNVLDGGCAFEQAIMERGRGNPLFNFLFELGSKEHTYY) form an SURP motif repeat. The tract at residues 412 to 434 (PPLPATRSPEHGKESRGTYAAGK) is disordered. The CID domain maps to 444 to 589 (LTDSQRDEFE…GLRATFLRSR (146 aa)). The SAP domain maps to 638–672 (LMNRPISELERRCRHNGLSLLGGREMMVARLVCLK). Disordered regions lie at residues 752 to 797 (REDD…PENE) and 846 to 947 (GLSG…RGMR). 3 stretches are compositionally biased toward basic and acidic residues: residues 854-876 (LPEK…RSES), 888-916 (LTRE…LDKD), and 924-947 (SSRE…RGMR).

In terms of tissue distribution, expressed in leaves, inflorescence stems, roots, flower buds, open flowers and siliques.

Functionally, probable SR-like splicing factor. In Arabidopsis thaliana (Mouse-ear cress), this protein is Protein RRC1-like.